The chain runs to 663 residues: 4-hydroxy-3-methylbut-2-en-1-yl diphosphate synthase (flavodoxin) (663 aa).

4 residues coordinate [4Fe-4S] cluster: Cys568, Cys571, Cys602, and Glu609.

Belongs to the IspG family. It depends on [4Fe-4S] cluster as a cofactor.

It catalyses the reaction (2E)-4-hydroxy-3-methylbut-2-enyl diphosphate + oxidized [flavodoxin] + H2O + 2 H(+) = 2-C-methyl-D-erythritol 2,4-cyclic diphosphate + reduced [flavodoxin]. Its pathway is isoprenoid biosynthesis; isopentenyl diphosphate biosynthesis via DXP pathway; isopentenyl diphosphate from 1-deoxy-D-xylulose 5-phosphate: step 5/6. Functionally, converts 2C-methyl-D-erythritol 2,4-cyclodiphosphate (ME-2,4cPP) into 1-hydroxy-2-methyl-2-(E)-butenyl 4-diphosphate. The polypeptide is 4-hydroxy-3-methylbut-2-en-1-yl diphosphate synthase (flavodoxin) (Leptospira borgpetersenii serovar Hardjo-bovis (strain L550)).